The sequence spans 762 residues: Putative cation exchanger YDL206W (762 aa).

The N-terminal stretch at methionine 1 to serine 26 is a signal peptide. Residues serine 27 to serine 30 lie on the Extracellular side of the membrane. An N-linked (GlcNAc...) asparagine glycan is attached at asparagine 28. The chain crosses the membrane as a helical span at residues isoleucine 31–valine 51. Over threonine 52–serine 102 the chain is Cytoplasmic. A helical transmembrane segment spans residues leucine 103–methionine 123. Residues glycine 124–tyrosine 156 lie on the Extracellular side of the membrane. Asparagine 148 carries N-linked (GlcNAc...) asparagine glycosylation. A helical transmembrane segment spans residues isoleucine 157 to glycine 177. Residue arginine 178 is a topological domain, cytoplasmic. Residues leucine 179–isoleucine 199 form a helical membrane-spanning segment. Residues lysine 200–glutamate 501 are Extracellular-facing. 2 N-linked (GlcNAc...) asparagine glycosylation sites follow: asparagine 280 and asparagine 329. The chain crosses the membrane as a helical span at residues isoleucine 502–leucine 522. At serine 523 to glutamine 554 the chain is on the cytoplasmic side. A helical transmembrane segment spans residues leucine 555–leucine 575. At tyrosine 576 to aspartate 589 the chain is on the extracellular side. The helical transmembrane segment at isoleucine 590–isoleucine 610 threads the bilayer. Over valine 611 to threonine 615 the chain is Cytoplasmic. The chain crosses the membrane as a helical span at residues histidine 616–glycine 636. Residues asparagine 637–lysine 650 are Extracellular-facing. N-linked (GlcNAc...) asparagine glycosylation occurs at asparagine 645. Residues isoleucine 651–phenylalanine 671 form a helical membrane-spanning segment. Topologically, residues glycine 672–asparagine 709 are cytoplasmic. The helical transmembrane segment at leucine 710–leucine 730 threads the bilayer. The Extracellular segment spans residues asparagine 731–lysine 738. A helical membrane pass occupies residues isoleucine 739 to valine 759. At histidine 760–valine 762 the chain is on the cytoplasmic side.

Belongs to the Ca(2+):cation antiporter (CaCA) (TC 2.A.19) family.

It localises to the membrane. Functionally, putative cation exchanger. In Saccharomyces cerevisiae (strain ATCC 204508 / S288c) (Baker's yeast), this protein is Putative cation exchanger YDL206W.